We begin with the raw amino-acid sequence, 179 residues long: Interleukin-10 (179 aa).

An N-terminal signal peptide occupies residues 1-19 (MPSSSALLCCLVFLAGVAA). 2 disulfide bridges follow: cysteine 31–cysteine 127 and cysteine 81–cysteine 133. Residue asparagine 135 is glycosylated (N-linked (GlcNAc...) asparagine).

This sequence belongs to the IL-10 family. In terms of assembly, homodimer. Interacts with IL10RA and IL10RB.

Its subcellular location is the secreted. Major immune regulatory cytokine that acts on many cells of the immune system where it has profound anti-inflammatory functions, limiting excessive tissue disruption caused by inflammation. Mechanistically, IL10 binds to its heterotetrameric receptor comprising IL10RA and IL10RB leading to JAK1 and STAT2-mediated phosphorylation of STAT3. In turn, STAT3 translocates to the nucleus where it drives expression of anti-inflammatory mediators. Targets antigen-presenting cells (APCs) such as macrophages and monocytes and inhibits their release of pro-inflammatory cytokines including granulocyte-macrophage colony-stimulating factor /GM-CSF, granulocyte colony-stimulating factor/G-CSF, IL-1 alpha, IL-1 beta, IL-6, IL-8 and TNF-alpha. Also interferes with antigen presentation by reducing the expression of MHC-class II and co-stimulatory molecules, thereby inhibiting their ability to induce T cell activation. In addition, controls the inflammatory response of macrophages by reprogramming essential metabolic pathways including mTOR signaling. This is Interleukin-10 (IL10) from Cervus elaphus (Red deer).